Reading from the N-terminus, the 266-residue chain is Undecaprenyl-diphosphatase (266 aa).

Helical transmembrane passes span 1–21, 39–59, 87–107, 111–131, 144–164, 183–203, 218–238, and 246–266; these read MDTFQVIILALIQGLTEFLPI, QGLSFDVAVNTGSLLAVVMYF, WWIILATIPAVIVGFSAKGFI, FRSIEVIAATTIIFGLLLWWA, VGWKKALVIGIAQAMALIPGT, AAARFSFLMSVPVSLGAAILV, ALGLGIVVSFIAAYICIHYFL, and MTPFVVYRLALGAVLCGFIFL.

The protein belongs to the UppP family.

It is found in the cell inner membrane. It carries out the reaction di-trans,octa-cis-undecaprenyl diphosphate + H2O = di-trans,octa-cis-undecaprenyl phosphate + phosphate + H(+). In terms of biological role, catalyzes the dephosphorylation of undecaprenyl diphosphate (UPP). Confers resistance to bacitracin. This chain is Undecaprenyl-diphosphatase, found in Shewanella halifaxensis (strain HAW-EB4).